Consider the following 464-residue polypeptide: NADH-quinone oxidoreductase subunit N 2 (464 aa).

A run of 14 helical transmembrane segments spans residues 12 to 32 (VGIIFLIILELFLPSFDLIGF), 33 to 53 (LGFLISFISGVLAIKYSLAGY), 62 to 82 (INAFSLLLKGVMYILTSFVIF), 93 to 113 (TFVENVYTFLLISLGLSIMVS), 117 to 137 (LAVILAGLELASISMYISVGM), 152 to 172 (LVLGSMTTAFFGIGSAFYIGA), 189 to 209 (FALASLFLFVAFALKVSAAPF), 227 to 247 (FISTVPKIGFYAVLFLLASYI), 254 to 274 (FSYIVGIVGVISMFWGNLVAY), 282 to 304 (MLAYSSIGHAGYFLIGFSRYNPL), 310 to 330 (IFYVIVYAFATAGAFLVLSIL), 351 to 371 (PFLATALALFLFALIGIPPFA), 400 to 420 (IIAAGYYLKLIVYMFFKEPAT), and 434 to 454 (IGISAFLIIVFFFGIFPNILF).

The protein belongs to the complex I subunit 2 family. NDH-1 is composed of 14 different subunits. Subunits NuoA, H, J, K, L, M, N constitute the membrane sector of the complex.

It is found in the cell inner membrane. It carries out the reaction a quinone + NADH + 5 H(+)(in) = a quinol + NAD(+) + 4 H(+)(out). Its function is as follows. NDH-1 shuttles electrons from NADH, via FMN and iron-sulfur (Fe-S) centers, to quinones in the respiratory chain. The immediate electron acceptor for the enzyme in this species is believed to be ubiquinone. Couples the redox reaction to proton translocation (for every two electrons transferred, four hydrogen ions are translocated across the cytoplasmic membrane), and thus conserves the redox energy in a proton gradient. This Hydrogenobaculum sp. (strain Y04AAS1) protein is NADH-quinone oxidoreductase subunit N 2.